A 66-amino-acid chain; its full sequence is DNA gyrase inhibitor YacG (66 aa).

Positions 9, 12, 28, and 32 each coordinate Zn(2+). The interval 45-66 is disordered; the sequence is HKIAGAEESEDELYSGDLEPRH.

It belongs to the DNA gyrase inhibitor YacG family. Interacts with GyrB. Zn(2+) is required as a cofactor.

In terms of biological role, inhibits all the catalytic activities of DNA gyrase by preventing its interaction with DNA. Acts by binding directly to the C-terminal domain of GyrB, which probably disrupts DNA binding by the gyrase. This chain is DNA gyrase inhibitor YacG, found in Pseudomonas entomophila (strain L48).